The chain runs to 109 residues: Arminin 6560 (109 aa).

Positions 1 to 21 (MKCLFGFLFIMLVAFLQDVHG) are cleaved as a signal peptide. A propeptide spanning residues 22–77 (VDSCIGKPCKVKGEDMKDIKEKKIEDIKEEIKNVKKEIFEDVDDELLDDNIRDDKI) is cleaved from the precursor. Ile-106 is subject to Isoleucine amide.

It belongs to the arminin family. In terms of tissue distribution, expressed in the ectodermal epithelium.

Its subcellular location is the secreted. The protein resides in the target cell membrane. Functionally, antimicrobial peptide with a broad-spectrum antimicrobial activity. Keeps its antibacterial activity under a wide range of salt concentrations that mimic physiological conditions of human blood, which is surprising, since Hydra is an obligate freshwater animal with nearly no salt tolerance. Does not affect red blood cells. The chain is Arminin 6560 from Hydra vulgaris (Hydra).